Reading from the N-terminus, the 64-residue chain is Enteric beta-defensin (64 aa).

The signal sequence occupies residues 1 to 26; that stretch reads MRLHHLLLTLLFLVLSAGSGFTQGIS. 3 cysteine pairs are disulfide-bonded: C31–C60, C38–C53, and C43–C61.

Belongs to the beta-defensin family. LAP/TAP subfamily. Inducibly expressed in enteric epithelial cells.

Its subcellular location is the secreted. Its function is as follows. Has antibacterial activity. This chain is Enteric beta-defensin (EBD), found in Bos taurus (Bovine).